A 1252-amino-acid polypeptide reads, in one-letter code: Myosin-1 (1252 aa).

Residues 1–27 (MAPSKKAGKKVTPASKKSAGQGKVAKA) are disordered. One can recognise a Myosin motor domain in the interval 38–712 (VGVSDMTLLT…TLFALETMRD (675 aa)). 128–135 (GESGAGKT) contacts ATP. Position 356 is a phosphoserine (S356). The interval 403-485 (IIGILDIFGF…PGIFAALNDA (83 aa)) is actin-binding. IQ domains follow at residues 716 to 736 (HNMA…KHEC) and 737 to 762 (ARRI…YGHQ). In terms of domain architecture, TH1 spans 770–953 (RRRFSLLSYR…TVHVASGEPP (184 aa)). Disordered regions lie at residues 945–1049 (VHVA…PETP) and 1103–1228 (PPKA…PATA). 2 stretches are compositionally biased toward pro residues: residues 989-999 (RSVPKPKPVAQ) and 1028-1046 (RPPP…PAKP). The SH3 domain maps to 1046–1104 (PETPMYRAKFAFEGQEGEMSLKKDDVVELVEKDDNGWWLVKMDGVEGWAPNNYLELVPP). The segment covering 1162–1175 (ADTTPASSRPSSAI) has biased composition (polar residues). Residues 1178–1193 (KPPPPVAAKPKPPVIP) are compositionally biased toward pro residues. The segment covering 1194-1203 (VKPSVSAKGP) has biased composition (low complexity). Residues 1204–1215 (AKPPIPTAPRPP) are compositionally biased toward pro residues. Over residues 1216-1228 (AASTSRSSKPATA) the composition is skewed to low complexity.

It belongs to the TRAFAC class myosin-kinesin ATPase superfamily. Myosin family. Phosphorylation of the TEDS site (Ser-356) is required for the polarization of the actin cytoskeleton. Phosphorylation probably activates the myosin-I ATPase activity.

Its subcellular location is the cytoplasm. It localises to the cytoskeleton. The protein resides in the actin patch. Type-I myosin implicated in the organization of the actin cytoskeleton. Required for proper actin cytoskeleton polarization. At the cell cortex, assembles in patch-like structures together with proteins from the actin-polymerizing machinery and promotes actin assembly. Functions as actin nucleation-promoting factor (NPF) for the Arp2/3 complex. The chain is Myosin-1 (MYO1) from Laccaria bicolor (strain S238N-H82 / ATCC MYA-4686) (Bicoloured deceiver).